Reading from the N-terminus, the 237-residue chain is Immunoglobulin superfamily member 6 (237 aa).

An N-terminal signal peptide occupies residues 1-27 (MGPVSARRSRLRPEISLILFQVGMVGA). Residues 28 to 152 (CTVYVLQPGY…ERLFSKEVRS (125 aa)) lie on the Extracellular side of the membrane. One can recognise an Ig-like C2-type domain in the interval 30–134 (VYVLQPGYLE…ELSPSAKHVG (105 aa)). A disulfide bond links Cys51 and Cys118. The chain crosses the membrane as a helical span at residues 153–173 (FLIVLLALLSVYITGVCVTFI). Topologically, residues 174–237 (VLFKSKSNGP…RKALPNPGRA (64 aa)) are cytoplasmic. Residues 215 to 229 (TSHLPEQEGTDENRK) are compositionally biased toward basic and acidic residues. Residues 215–237 (TSHLPEQEGTDENRKALPNPGRA) form a disordered region.

As to expression, ubiquitous with higher expression in immune tissue.

The protein localises to the membrane. The chain is Immunoglobulin superfamily member 6 (Igsf6) from Mus musculus (Mouse).